A 139-amino-acid chain; its full sequence is Small ribosomal subunit protein uS11 (139 aa).

The segment at 117-139 (VEDVTPIPHDGTRPKGGRRGRRV) is disordered.

It belongs to the universal ribosomal protein uS11 family. As to quaternary structure, part of the 30S ribosomal subunit.

Its function is as follows. Located on the platform of the 30S subunit. The polypeptide is Small ribosomal subunit protein uS11 (Thermococcus onnurineus (strain NA1)).